A 238-amino-acid chain; its full sequence is Isoamyl acetate-hydrolyzing esterase (238 aa).

Ser-12 serves as the catalytic Nucleophile. Residue Asp-187 is the Proton donor of the active site. His-190 (proton acceptor) is an active-site residue.

It belongs to the 'GDSL' lipolytic enzyme family. IAH1 subfamily. As to quaternary structure, homodimer.

It catalyses the reaction 3-methylbutyl acetate + H2O = 3-methylbutanol + acetate + H(+). Its function is as follows. Plays a crucial role in the hydrolysis of isoamyl acetate in sake mash. Hydrolyzes short chain esters from acetate (C2) to hexanoate (C6), showing more specificity for shorter chain exters. No activity for decanoate (C10) esters. In Saccharomyces cerevisiae (strain ATCC 204508 / S288c) (Baker's yeast), this protein is Isoamyl acetate-hydrolyzing esterase.